The following is a 400-amino-acid chain: Nicotinate phosphoribosyltransferase (400 aa).

His220 bears the Phosphohistidine; by autocatalysis mark.

Belongs to the NAPRTase family. In terms of processing, transiently phosphorylated on a His residue during the reaction cycle. Phosphorylation strongly increases the affinity for substrates and increases the rate of nicotinate D-ribonucleotide production. Dephosphorylation regenerates the low-affinity form of the enzyme, leading to product release.

It carries out the reaction nicotinate + 5-phospho-alpha-D-ribose 1-diphosphate + ATP + H2O = nicotinate beta-D-ribonucleotide + ADP + phosphate + diphosphate. Its pathway is cofactor biosynthesis; NAD(+) biosynthesis; nicotinate D-ribonucleotide from nicotinate: step 1/1. Catalyzes the synthesis of beta-nicotinate D-ribonucleotide from nicotinate and 5-phospho-D-ribose 1-phosphate at the expense of ATP. This Escherichia coli (strain K12 / MC4100 / BW2952) protein is Nicotinate phosphoribosyltransferase.